Consider the following 467-residue polypeptide: Acetaldehyde dehydrogenase (acetylating) EutE (467 aa).

It belongs to the EutE/PduP family. In terms of assembly, interacts with EutS, which targets it to the interior of the BMC. Has a very strong preference for NAD(+) over NADP(+). serves as cofactor.

The protein resides in the bacterial microcompartment. The catalysed reaction is acetaldehyde + NAD(+) + CoA = acetyl-CoA + NADH + H(+). It functions in the pathway amine and polyamine degradation; ethanolamine degradation. Its function is as follows. Acts as the second step in ethanolamine degradation by converting acetaldehyde into acetyl-CoA. May play a role in bacterial microcompartment (BMC) assembly or maintenance. Directly targeted to the BMC. Its heterologous expression in S.cerevisiae increases the level of acetylating acetaldehyde dehydrogenase activity. This Escherichia coli (strain K12) protein is Acetaldehyde dehydrogenase (acetylating) EutE (eutE).